The sequence spans 100 residues: Putative pterin-4-alpha-carbinolamine dehydratase (100 aa).

The protein belongs to the pterin-4-alpha-carbinolamine dehydratase family.

It carries out the reaction (4aS,6R)-4a-hydroxy-L-erythro-5,6,7,8-tetrahydrobiopterin = (6R)-L-erythro-6,7-dihydrobiopterin + H2O. This Afipia carboxidovorans (strain ATCC 49405 / DSM 1227 / KCTC 32145 / OM5) (Oligotropha carboxidovorans) protein is Putative pterin-4-alpha-carbinolamine dehydratase.